A 347-amino-acid chain; its full sequence is GMP reductase (347 aa).

108 to 131 (AEFEKVKKIMALSEEFVFICIDIA) is an NADP(+) binding site. K(+)-binding residues include G181 and G183. Residue C186 is the Thioimidate intermediate of the active site. 216-239 (IIGDGGCSCAGDVSKAFGGGADFV) provides a ligand contact to NADP(+).

The protein belongs to the IMPDH/GMPR family. GuaC type 1 subfamily. In terms of assembly, homotetramer.

It catalyses the reaction IMP + NH4(+) + NADP(+) = GMP + NADPH + 2 H(+). Functionally, catalyzes the irreversible NADPH-dependent deamination of GMP to IMP. It functions in the conversion of nucleobase, nucleoside and nucleotide derivatives of G to A nucleotides, and in maintaining the intracellular balance of A and G nucleotides. The polypeptide is GMP reductase (Vibrio atlanticus (strain LGP32) (Vibrio splendidus (strain Mel32))).